The primary structure comprises 2196 residues: Genome polyprotein (2196 aa).

Gly-2 is lipidated: N-myristoyl glycine; by host. The Cytoplasmic portion of the chain corresponds to 2 to 1506 (GAQVSTQKTG…HVSRAFICLQ (1505 aa)). The tract at residues 568–584 (DLQGDSEHAVESAVSRV) is amphipathic alpha-helix. Catalysis depends on for protease 2A activity residues His-883 and Asp-901. Residues Cys-918 and Cys-920 each contribute to the Zn(2+) site. Cys-972 serves as the catalytic For protease 2A activity. Zn(2+) is bound by residues Cys-978 and His-980. The interval 1112-1184 (NNGWLKKFTE…EQSAPSQSDQ (73 aa)) is membrane-binding. Residues 1112–1250 (NNGWLKKFTE…SPGAGKSVAT (139 aa)) form an oligomerization region. The segment at 1133–1137 (AIKIQ) is RNA-binding. Positions 1216–1372 (EKKMSNYIQF…SMYSQNGKIN (157 aa)) constitute an SF3 helicase domain. 3 residues coordinate Zn(2+): Cys-1380, Cys-1392, and Cys-1397. The C4-type; degenerate zinc-finger motif lies at 1380–1397 (CDEECCPVNFKKCCPLVC). The RNA-binding stretch occupies residues 1424-1431 (EYNHRHSV). The tract at residues 1435 to 1440 (LEALFQ) is oligomerization. The stretch at 1507–1522 (ALTTFVSVAGIIYIIY) is an intramembrane region. Over 1523–2196 (KLFAGFQGAY…TLRRKWLDSF (674 aa)) the chain is Cytoplasmic. Tyr-1532 carries the O-(5'-phospho-RNA)-tyrosine modification. The region spanning 1552 to 1730 (GPAFEFAVAM…FSAALLKHYF (179 aa)) is the Peptidase C3 domain. Residues His-1591, Glu-1622, and Cys-1698 each act as for protease 3C activity in the active site. Positions 1961 to 2077 (GHLIAFDYSG…SYPWPIDASL (117 aa)) constitute a RdRp catalytic domain. Mg(2+)-binding residues include Asp-1967 and Asp-2063.

Belongs to the picornaviruses polyprotein family. As to quaternary structure, interacts with capsid protein VP1 and capsid protein VP3 to form heterotrimeric protomers. In terms of assembly, interacts with capsid protein VP0, and capsid protein VP3 to form heterotrimeric protomers. Five protomers subsequently associate to form pentamers which serve as building blocks for the capsid. Interacts with capsid protein VP2, capsid protein VP3 and capsid protein VP4 following cleavage of capsid protein VP0. Interacts with capsid protein VP1 and capsid protein VP3 in the mature capsid. As to quaternary structure, interacts with capsid protein VP0 and capsid protein VP1 to form heterotrimeric protomers. Five protomers subsequently associate to form pentamers which serve as building blocks for the capsid. Interacts with capsid protein VP4 in the mature capsid. Interacts with protein 2C; this interaction may be important for virion morphogenesis. In terms of assembly, interacts with capsid protein VP1 and capsid protein VP3. Homodimer. As to quaternary structure, homohexamer; forms a hexameric ring structure with 6-fold symmetry characteristic of AAA+ ATPases. Interacts (via N-terminus) with host RTN3 (via reticulon domain); this interaction is important for viral replication. Interacts with capsid protein VP3; this interaction may be important for virion morphogenesis. In terms of assembly, interacts with protein 3CD. Homodimer. Interacts with host GBF1. Interacts (via GOLD domain) with host ACBD3 (via GOLD domain); this interaction allows the formation of a viral protein 3A/ACBD3 heterotetramer with a 2:2 stoichiometry, which will stimulate the recruitment of host PI4KB in order to synthesize PI4P at the viral RNA replication sites. As to quaternary structure, interacts with RNA-directed RNA polymerase. In terms of assembly, interacts with protein 3AB and with RNA-directed RNA polymerase. Interacts with Viral protein genome-linked and with protein 3CD. Mg(2+) is required as a cofactor. In terms of processing, specific enzymatic cleavages in vivo by the viral proteases yield processing intermediates and the mature proteins. Myristoylation is required for the formation of pentamers during virus assembly. Further assembly of 12 pentamers and a molecule of genomic RNA generates the provirion. Post-translationally, during virion maturation, immature virions are rendered infectious following cleavage of VP0 into VP4 and VP2. This maturation seems to be an autocatalytic event triggered by the presence of RNA in the capsid and it is followed by a conformational change infectious virion. In terms of processing, myristoylation is required during RNA encapsidation and formation of the mature virus particle. VPg is uridylylated by the polymerase into VPg-pUpU. This acts as a nucleotide-peptide primer for the genomic RNA replication.

It localises to the virion. The protein resides in the host cytoplasm. Its subcellular location is the host cytoplasmic vesicle membrane. The protein localises to the host nucleus. The enzyme catalyses a ribonucleoside 5'-triphosphate + H2O = a ribonucleoside 5'-diphosphate + phosphate + H(+). It carries out the reaction Selective cleavage of Tyr-|-Gly bond in the picornavirus polyprotein.. The catalysed reaction is RNA(n) + a ribonucleoside 5'-triphosphate = RNA(n+1) + diphosphate. It catalyses the reaction Selective cleavage of Gln-|-Gly bond in the poliovirus polyprotein. In other picornavirus reactions Glu may be substituted for Gln, and Ser or Thr for Gly.. With respect to regulation, replication or transcription is subject to high level of random mutations by the nucleotide analog ribavirin. In terms of biological role, forms an icosahedral capsid of pseudo T=3 symmetry with capsid proteins VP2 and VP3. The capsid is 300 Angstroms in diameter, composed of 60 copies of each capsid protein and enclosing the viral positive strand RNA genome. Capsid protein VP1 mainly forms the vertices of the capsid. Capsid protein VP1 interacts with host cell receptor to provide virion attachment to target host cells. This attachment induces virion internalization. Tyrosine kinases are probably involved in the entry process. After binding to its receptor, the capsid undergoes conformational changes. Capsid protein VP1 N-terminus (that contains an amphipathic alpha-helix) and capsid protein VP4 are externalized. Together, they shape a pore in the host membrane through which viral genome is translocated to host cell cytoplasm. Its function is as follows. Forms an icosahedral capsid of pseudo T=3 symmetry with capsid proteins VP2 and VP3. The capsid is 300 Angstroms in diameter, composed of 60 copies of each capsid protein and enclosing the viral positive strand RNA genome. Lies on the inner surface of the capsid shell. After binding to the host receptor, the capsid undergoes conformational changes. Capsid protein VP4 is released, Capsid protein VP1 N-terminus is externalized, and together, they shape a pore in the host membrane through which the viral genome is translocated into the host cell cytoplasm. Functionally, component of immature procapsids, which is cleaved into capsid proteins VP4 and VP2 after maturation. Allows the capsid to remain inactive before the maturation step. In terms of biological role, cysteine protease that cleaves viral polyprotein and specific host proteins. It is responsible for the autocatalytic cleavage between the P1 and P2 regions, which is the first cleavage occurring in the polyprotein. Also cleaves the host translation initiation factor EIF4G1, in order to shut down the capped cellular mRNA translation. Inhibits the host nucleus-cytoplasm protein and RNA trafficking by cleaving host members of the nuclear pores. Counteracts stress granule formation probably by antagonizing its assembly or promoting its dissassembly. Its function is as follows. Plays an essential role in the virus replication cycle by acting as a viroporin. Creates a pore in the host endoplasmic reticulum and as a consequence releases Ca2+ in the cytoplasm of infected cell. In turn, high levels of cytoplasmic calcium may trigger membrane trafficking and transport of viral ER-associated proteins to viroplasms, sites of viral genome replication. Induces and associates with structural rearrangements of intracellular membranes. Displays RNA-binding, nucleotide binding and NTPase activities. May play a role in virion morphogenesis and viral RNA encapsidation by interacting with the capsid protein VP3. Functionally, localizes the viral replication complex to the surface of membranous vesicles. Together with protein 3CD binds the Cis-Active RNA Element (CRE) which is involved in RNA synthesis initiation. Acts as a cofactor to stimulate the activity of 3D polymerase, maybe through a nucleid acid chaperone activity. In terms of biological role, localizes the viral replication complex to the surface of membranous vesicles. It inhibits host cell endoplasmic reticulum-to-Golgi apparatus transport and causes the disassembly of the Golgi complex, possibly through GBF1 interaction. This would result in depletion of MHC, trail receptors and IFN receptors at the host cell surface. Plays an essential role in viral RNA replication by recruiting ACBD3 and PI4KB at the viral replication sites, thereby allowing the formation of the rearranged membranous structures where viral replication takes place. Its function is as follows. Acts as a primer for viral RNA replication and remains covalently bound to viral genomic RNA. VPg is uridylylated prior to priming replication into VPg-pUpU. The oriI viral genomic sequence may act as a template for this. The VPg-pUpU is then used as primer on the genomic RNA poly(A) by the RNA-dependent RNA polymerase to replicate the viral genome. During genome replication, the VPg-RNA linkage is removed by the host TDP2, thereby accelerating replication. During the late stage of the replication cycle, host TDP2 is excluded from sites of viral RNA synthesis and encapsidation, allowing for the generation of progeny virions. Involved in the viral replication complex and viral polypeptide maturation. It exhibits protease activity with a specificity and catalytic efficiency that is different from protease 3C. Protein 3CD lacks polymerase activity. Protein 3CD binds to the 5'UTR of the viral genome. Functionally, replicates the viral genomic RNA on the surface of intracellular membranes. May form linear arrays of subunits that propagate along a strong head-to-tail interaction called interface-I. Covalently attaches UMP to a tyrosine of VPg, which is used to prime RNA synthesis. The positive stranded RNA genome is first replicated at virus induced membranous vesicles, creating a dsRNA genomic replication form. This dsRNA is then used as template to synthesize positive stranded RNA genomes. ss(+)RNA genomes are either translated, replicated or encapsidated. In terms of biological role, major viral protease that mediates proteolytic processing of the polyprotein. Cleaves host EIF5B, contributing to host translation shutoff. Also cleaves host PABPC1, contributing to host translation shutoff. Cleaves host NLRP1, triggers host N-glycine-mediated degradation of the autoinhibitory NLRP1 N-terminal fragment. The sequence is that of Genome polyprotein from Homo sapiens (Human).